A 322-amino-acid chain; its full sequence is Rhomboid-like protein 16, chloroplastic (322 aa).

The transit peptide at 1-52 directs the protein to the chloroplast; sequence MHAIFCRRVAVGCSSPQLTKLVTKQASQSRHSLSHLLPFDLSSRFVPPYVVS. Transmembrane regions (helical) follow at residues 110–130, 166–186, 201–221, 238–258, 265–285, and 295–315; these read WING…AVFT, FSHV…YFGA, YFAG…LSVI, IGKL…MLLY, FGLM…LNII, and TLTS…WARI.

It belongs to the peptidase S54 family.

The protein localises to the plastid. The protein resides in the chloroplast membrane. Its function is as follows. Rhomboid-type serine protease that catalyzes intramembrane proteolysis. May cleave the plastid translocon component Tic40. The chain is Rhomboid-like protein 16, chloroplastic from Arabidopsis thaliana (Mouse-ear cress).